Reading from the N-terminus, the 450-residue chain is Probable ECA polymerase (450 aa).

The next 11 helical transmembrane spans lie at 6–26, 37–57, 63–83, 118–138, 155–175, 181–201, 207–227, 228–248, 341–361, 378–398, and 410–430; these read FSGLFVVWLLCTLFIATLTWF, VFFSLLFLLTFFFGFPLTSVL, VGVAPPEILLQVLLSAGCFYA, VILMGIALVSVGIFFMHNGFL, GVALKRFFYFFIPAMLVVYFL, AWLFFLVSTVAFGLLTYMIVG, IIIAFAIFLFIGIIRGWISLW, MLAAAGVLGIVGMFWLALKRY, LVVMGGALFIPLGAIVVGLII, YKAAILHSFCFGAIFNMIVLA, and VFFIVVFGACLMIAKLLYWLF.

Belongs to the WzyE family. In terms of assembly, probably part of a complex composed of WzxE, WzyE and WzzE.

Its subcellular location is the cell inner membrane. Its pathway is bacterial outer membrane biogenesis; enterobacterial common antigen biosynthesis. Functionally, probably involved in the polymerization of enterobacterial common antigen (ECA) trisaccharide repeat units. This Shigella flexneri protein is Probable ECA polymerase.